The chain runs to 63 residues: UPF0434 protein GDI0182/Gdia_2252 (63 aa).

Belongs to the UPF0434 family.

In Gluconacetobacter diazotrophicus (strain ATCC 49037 / DSM 5601 / CCUG 37298 / CIP 103539 / LMG 7603 / PAl5), this protein is UPF0434 protein GDI0182/Gdia_2252.